We begin with the raw amino-acid sequence, 201 residues long: Holliday junction branch migration complex subunit RuvA (201 aa).

The domain I stretch occupies residues M1–Q63. The segment at T64–V142 is domain II. A flexible linker region spans residues A143 to S153. Residues S153–K201 are domain III.

It belongs to the RuvA family. In terms of assembly, homotetramer. Forms an RuvA(8)-RuvB(12)-Holliday junction (HJ) complex. HJ DNA is sandwiched between 2 RuvA tetramers; dsDNA enters through RuvA and exits via RuvB. An RuvB hexamer assembles on each DNA strand where it exits the tetramer. Each RuvB hexamer is contacted by two RuvA subunits (via domain III) on 2 adjacent RuvB subunits; this complex drives branch migration. In the full resolvosome a probable DNA-RuvA(4)-RuvB(12)-RuvC(2) complex forms which resolves the HJ.

It localises to the cytoplasm. Functionally, the RuvA-RuvB-RuvC complex processes Holliday junction (HJ) DNA during genetic recombination and DNA repair, while the RuvA-RuvB complex plays an important role in the rescue of blocked DNA replication forks via replication fork reversal (RFR). RuvA specifically binds to HJ cruciform DNA, conferring on it an open structure. The RuvB hexamer acts as an ATP-dependent pump, pulling dsDNA into and through the RuvAB complex. HJ branch migration allows RuvC to scan DNA until it finds its consensus sequence, where it cleaves and resolves the cruciform DNA. The sequence is that of Holliday junction branch migration complex subunit RuvA from Listeria monocytogenes serotype 4b (strain CLIP80459).